Reading from the N-terminus, the 470-residue chain is MPHRKKKPFIEKKKAVSFHLVHRSQRDPLAADETAPQRVLLPTQKVNDEERRAEQRKYGVFFDDDYDYLQHLKEPSGPAELIPSTSFATPLCDKTEDPCVYSSTGIKLPSSVFASEFEEDVGLLNKAAPVSGPRLDFDPDIVAALDDDFDFDDPENLLEDDFILQANKPTGGERMDTESEEDDGHEWEDMDDEEGSDDRSSAGFLSDGGDLSAPGSPQEAMKKHLFWEEETKSRFTEYSMTSSVMRRNEQLTLHDERFEKFYEQYDDVEIGALDNAELEGTIQVDSNRLQEVLNDYYKEKAENCVKLSTLEPFEDQDLPTNELDESEKEETITVVLEEAKEKWDCESICSTYSNLYNHPQLIKYEPKPKQIHLSSKTGIPLNVLPKKGLTAKQVERMQMINGSDLPKVSTQPRSKDETKEDKRARKQAIKEERKERRVEKKANKLAFKLEKRRQEKELLNLKKNIEGLKL.

2 positions are modified to phosphoserine: Ser17 and Ser24. 2 disordered regions span residues 25-53 (QRDP…ERRA) and 162-222 (FILQ…EAMK). Acidic residues predominate over residues 178 to 196 (ESEEDDGHEWEDMDDEEGS). Residues Ser243, Ser326, and Ser403 each carry the phosphoserine modification. Positions 400 to 437 (INGSDLPKVSTQPRSKDETKEDKRARKQAIKEERKERR) are disordered. The segment covering 413–437 (RSKDETKEDKRARKQAIKEERKERR) has biased composition (basic and acidic residues). Residues 414 to 470 (SKDETKEDKRARKQAIKEERKERRVEKKANKLAFKLEKRRQEKELLNLKKNIEGLKL) are a coiled coil.

The protein belongs to the LTV1 family.

Functionally, essential for ribosome biogenesis. The polypeptide is Protein LTV1 homolog (Ltv1) (Mus musculus (Mouse)).